Consider the following 306-residue polypeptide: Pantothenate kinase (306 aa).

91–98 (GSVAVGKS) contacts ATP.

It belongs to the prokaryotic pantothenate kinase family.

The protein localises to the cytoplasm. It catalyses the reaction (R)-pantothenate + ATP = (R)-4'-phosphopantothenate + ADP + H(+). It functions in the pathway cofactor biosynthesis; coenzyme A biosynthesis; CoA from (R)-pantothenate: step 1/5. In Streptococcus suis (strain 05ZYH33), this protein is Pantothenate kinase.